The chain runs to 205 residues: Ras-related and estrogen-regulated growth inhibitor-like protein (205 aa).

The tract at residues 1–205 is small GTPase-like; that stretch reads MSNFLHLKYN…NVFGKRRKSV (205 aa). GTP-binding positions include 11–18, 58–64, and 123–126; these read EKSVSVTK, DPCSQTQ, and NKRD.

The protein belongs to the small GTPase superfamily. Ras family.

It catalyses the reaction GTP + H2O = GDP + phosphate + H(+). Its function is as follows. Binds GDP/GTP and may possess intrinsic GTPase activity. In Homo sapiens (Human), this protein is Ras-related and estrogen-regulated growth inhibitor-like protein (RERGL).